The following is a 509-amino-acid chain: tRNA (guanine(37)-N(1))-methyltransferase (509 aa).

The transit peptide at 1-57 (MVLWILWRPFGFSRRLLKLERHSITESKSLIPLAWTSLTQTLSESPGIFLLGQRKRF) directs the protein to the mitochondrion. S-adenosyl-L-methionine-binding positions include H289, 327 to 328 (DL), 355 to 356 (DG), and N387. The disordered stretch occupies residues 478–509 (TKNPENHEDPPLKRQRTAEAFSDEKTQIASNT).

This sequence belongs to the class I-like SAM-binding methyltransferase superfamily. TRM5/TYW2 family. In terms of assembly, monomer.

It localises to the mitochondrion matrix. It is found in the nucleus. Its subcellular location is the cytoplasm. The enzyme catalyses guanosine(37) in tRNA + S-adenosyl-L-methionine = N(1)-methylguanosine(37) in tRNA + S-adenosyl-L-homocysteine + H(+). Its function is as follows. Involved in mitochondrial tRNA methylation. Specifically methylates the N1 position of guanosine-37 in various tRNAs. Methylation is not dependent on the nature of the nucleoside 5' of the target nucleoside. This is the first step in the biosynthesis of wybutosine (yW), a modified base adjacent to the anticodon of tRNAs and required for accurate decoding. The chain is tRNA (guanine(37)-N(1))-methyltransferase from Macaca fascicularis (Crab-eating macaque).